Here is a 142-residue protein sequence, read N- to C-terminus: Hemoglobin subunit alpha-1 (142 aa).

Ser1 is subject to N-acetylserine. One can recognise a Globin domain in the interval 1–142 (SLSDKDKAAV…VALALAERYR (142 aa)). O2 is bound at residue His59. Residue His88 coordinates heme b.

This sequence belongs to the globin family. Hb1 is a heterotetramer of two alpha-1 chains and two beta chains. HbC is a heterotetramer of two alpha-1 chains and two beta-C chains. As to expression, red blood cells.

Its function is as follows. Involved in oxygen transport from gills to the various peripheral tissues. The polypeptide is Hemoglobin subunit alpha-1 (hba1) (Trematomus newnesi (Dusky notothen)).